Consider the following 289-residue polypeptide: Serine/threonine-protein phosphatase Pgam5, mitochondrial (289 aa).

The helical transmembrane segment at 7-23 threads the bilayer; it reads FACGTGAGLAAYYLQRL.

This sequence belongs to the phosphoglycerate mutase family. BPG-dependent PGAM subfamily. As to quaternary structure, interacts with Pk92B/ASK1.

It localises to the mitochondrion outer membrane. The catalysed reaction is O-phospho-L-seryl-[protein] + H2O = L-seryl-[protein] + phosphate. It carries out the reaction O-phospho-L-threonyl-[protein] + H2O = L-threonyl-[protein] + phosphate. Its function is as follows. Displays phosphatase activity for serine/threonine residues, and dephosphorylates and activates Pk92B kinase. Has apparently no phosphoglycerate mutase activity. In Drosophila sechellia (Fruit fly), this protein is Serine/threonine-protein phosphatase Pgam5, mitochondrial.